The chain runs to 352 residues: MAGAITDQLRRYLHGRRRAAAHMGSDYDGLIADLEDFVLGGGKRLRPLFAYWGWHAVASREPDPDVLLLFSALELLHAWALVHDDLIDRSATRRGRPTAQLRYAALHRDRDWRGSPDQFGMSAAILLGDLAQVWADDIVSKVCQSALAPDAQRRVHRVWADIRNEVLGGQYLDIVAEASAAESIESAMNVATLKTACYTVSRPLQLGTAAAADRSDVAAIFEHFGADLGVAFQLRDDVLGVFGDPAVTGKPSGDDLKSGKRTVLVAEAVELADRSDPLAAKLLRTSIGTRLTDAQVRELRTVIEAVGARAAAESRIAALTQRALATLASAPINATAKAGLSELAMMAANRSA.

Positions 43, 46, and 77 each coordinate isopentenyl diphosphate. Mg(2+) is bound by residues D84 and D88. Residues 84 to 88 carry the DDXXD motif motif; sequence DDLID. Position 94 (R94) interacts with isopentenyl diphosphate. The DDXXD motif motif lies at 236-240; the sequence is DDVLG.

It belongs to the FPP/GGPP synthase family. Mg(2+) serves as cofactor.

It carries out the reaction isopentenyl diphosphate + dimethylallyl diphosphate = (2E)-geranyl diphosphate + diphosphate. The catalysed reaction is isopentenyl diphosphate + (2E)-geranyl diphosphate = (2E,6E)-farnesyl diphosphate + diphosphate. It participates in isoprenoid biosynthesis; geranyl diphosphate biosynthesis; geranyl diphosphate from dimethylallyl diphosphate and isopentenyl diphosphate: step 1/1. Its pathway is isoprenoid biosynthesis; farnesyl diphosphate biosynthesis; farnesyl diphosphate from geranyl diphosphate and isopentenyl diphosphate. Functionally, catalyzes the sequential condensations of isopentenyl pyrophosphate (IPP) with dimethylallyl diphosphate (DMAPP) to yield geranyl diphosphate (GPP) and with GPP to yield (2E,6E)-farnesyl diphosphate (E,E-FPP). In Mycobacterium tuberculosis (strain ATCC 25618 / H37Rv), this protein is (2E,6E)-farnesyl diphosphate synthase.